A 287-amino-acid chain; its full sequence is 4-diphosphocytidyl-2-C-methyl-D-erythritol kinase (287 aa).

The active site involves K10. 92-102 (PLAAGLAGGSA) serves as a coordination point for ATP. D134 is an active-site residue.

This sequence belongs to the GHMP kinase family. IspE subfamily.

It catalyses the reaction 4-CDP-2-C-methyl-D-erythritol + ATP = 4-CDP-2-C-methyl-D-erythritol 2-phosphate + ADP + H(+). It functions in the pathway isoprenoid biosynthesis; isopentenyl diphosphate biosynthesis via DXP pathway; isopentenyl diphosphate from 1-deoxy-D-xylulose 5-phosphate: step 3/6. Its function is as follows. Catalyzes the phosphorylation of the position 2 hydroxy group of 4-diphosphocytidyl-2C-methyl-D-erythritol. In Caldanaerobacter subterraneus subsp. tengcongensis (strain DSM 15242 / JCM 11007 / NBRC 100824 / MB4) (Thermoanaerobacter tengcongensis), this protein is 4-diphosphocytidyl-2-C-methyl-D-erythritol kinase.